A 113-amino-acid chain; its full sequence is Putative pterin-4-alpha-carbinolamine dehydratase (113 aa).

Belongs to the pterin-4-alpha-carbinolamine dehydratase family.

It catalyses the reaction (4aS,6R)-4a-hydroxy-L-erythro-5,6,7,8-tetrahydrobiopterin = (6R)-L-erythro-6,7-dihydrobiopterin + H2O. This Bordetella bronchiseptica (strain ATCC BAA-588 / NCTC 13252 / RB50) (Alcaligenes bronchisepticus) protein is Putative pterin-4-alpha-carbinolamine dehydratase.